Reading from the N-terminus, the 477-residue chain is MNAAVKALHENDYLVADLSLAAWGRKEIRIAETEMPGLMAIREEFAAKQPLKGARVTGSLHMTIQTAVLVETLQALGAQVRWASCNIFSTQDHAAAALAVQGTPVFAYKGETLADYWDYTHRIFEFGAAGTDGEGPNMILDDGGDATLLMHLGKRAEKDLSLLDNPKSEEETCLYAAIRAKLAVDPTWYSRKGAQIIGVTEETTTGVHRLKEMSAAGTLLFRAINVNDSVTKSKFDNLYGCRESLVDGIKRATDVMIAGKVACVAGYGDVGKGSAQALRALSAQVWVTEIDPINALQAAMEGYKVVTMEYAADKADIFVTTTGNRDVIRHEHMAAMKDQAIVCNIGHFDNEIDVASLEGYEWDEIKPQVDHIIFPDGKKIILLAKGRLVNLGCATGHPSFVMSSSFANQTIAQIELFCHPDGYDVGKVYVLPKHLDEKVARLHLKKVGAMLTELTDDQAAYIGVPKNGPYKPDTYRY.

Substrate-binding residues include threonine 63, aspartate 142, and glutamate 202. Position 203 to 205 (203 to 205 (TTT)) interacts with NAD(+). The substrate site is built by lysine 232 and aspartate 236. Residues asparagine 237, 266–271 (GYGDVG), glutamate 289, asparagine 324, 345–347 (IGH), and asparagine 390 each bind NAD(+).

It belongs to the adenosylhomocysteinase family. NAD(+) serves as cofactor.

The protein resides in the cytoplasm. The enzyme catalyses S-adenosyl-L-homocysteine + H2O = L-homocysteine + adenosine. It participates in amino-acid biosynthesis; L-homocysteine biosynthesis; L-homocysteine from S-adenosyl-L-homocysteine: step 1/1. Its function is as follows. May play a key role in the regulation of the intracellular concentration of adenosylhomocysteine. The polypeptide is Adenosylhomocysteinase (Leptothrix cholodnii (strain ATCC 51168 / LMG 8142 / SP-6) (Leptothrix discophora (strain SP-6))).